We begin with the raw amino-acid sequence, 360 residues long: DNA replication and repair protein RecF (360 aa).

33-40 (GENGSGKT) is an ATP binding site.

The protein belongs to the RecF family.

It localises to the cytoplasm. Its function is as follows. The RecF protein is involved in DNA metabolism; it is required for DNA replication and normal SOS inducibility. RecF binds preferentially to single-stranded, linear DNA. It also seems to bind ATP. This chain is DNA replication and repair protein RecF, found in Rickettsia peacockii (strain Rustic).